Consider the following 428-residue polypeptide: Putative aspergillopepsin A-like aspartic endopeptidase AFUA_2G15950 (428 aa).

The N-terminal stretch at 1–19 (MHSLQSFLFLLLLGYGVFA) is a signal peptide. A propeptide spans 20-90 (APTSPQAQSQ…GTAANLVTDV (71 aa)) (activation peptide). One can recognise a Peptidase A1 domain in the interval 110–425 (FVSPVTIGGQ…DLRGPSIGLA (316 aa)). The active site involves Asp126. Asn276 is a glycosylation site (N-linked (GlcNAc...) asparagine). Asp312 is an active-site residue. Asn380 is a glycosylation site (N-linked (GlcNAc...) asparagine).

Belongs to the peptidase A1 family.

Its subcellular location is the secreted. This is Putative aspergillopepsin A-like aspartic endopeptidase AFUA_2G15950 from Aspergillus fumigatus (strain ATCC MYA-4609 / CBS 101355 / FGSC A1100 / Af293) (Neosartorya fumigata).